We begin with the raw amino-acid sequence, 89 residues long: Large ribosomal subunit protein bL27 (89 aa).

This sequence belongs to the bacterial ribosomal protein bL27 family.

This is Large ribosomal subunit protein bL27 from Afipia carboxidovorans (strain ATCC 49405 / DSM 1227 / KCTC 32145 / OM5) (Oligotropha carboxidovorans).